Consider the following 147-residue polypeptide: Elongation factor Tu (147 aa).

Belongs to the GTP-binding elongation factor family. EF-Tu/EF-1A subfamily. As to quaternary structure, monomer.

The protein resides in the cytoplasm. This protein promotes the GTP-dependent binding of aminoacyl-tRNA to the A-site of ribosomes during protein biosynthesis. The protein is Elongation factor Tu (tuf) of Fructilactobacillus sanfranciscensis (Lactobacillus sanfranciscensis).